The primary structure comprises 437 residues: MRELTLTTTVFQTTKSQEIFAAAQKLMPGGVSSPVRAFKSVGGQPIVFDHVKGAHIWDVDGNQYIDYVGSWGPAIVGHAHPEVIDALHAALEKGTSFGAPCLLENILAEMVIAAVPSVEMVRFVNSGTEACMAVLRLMRAYTQREKVIKFEGCYHGHADMFLVKAGSGVATLGLPDSPGVPKATTAATLTAPYNDLEAVSRLFEQYPNDIAGVILEPVVGNAGFIPPDAGFLEGLRELTKQYGALLVFDEVMTGFRIAYGGAQEKFGVTPDLTTLGKVIGGGLPVGAYGGRAEIMKMVAPAGPVYQAGTLSGNPLAMTAGIKTLEILSRPGSYEHLDRITGKLVQGLLDAAREFGHEVCGGHISGMFGLFFTAGPVTNYEQAKQSDLKKFAAFHRGMLEQGIYLAPSQFEAGFTSLAHTEADIERTIAAARTVLSQL.

At Lys277 the chain carries N6-(pyridoxal phosphate)lysine.

Belongs to the class-III pyridoxal-phosphate-dependent aminotransferase family. HemL subfamily. In terms of assembly, homodimer. The cofactor is pyridoxal 5'-phosphate.

The protein localises to the cytoplasm. The enzyme catalyses (S)-4-amino-5-oxopentanoate = 5-aminolevulinate. Its pathway is porphyrin-containing compound metabolism; protoporphyrin-IX biosynthesis; 5-aminolevulinate from L-glutamyl-tRNA(Glu): step 2/2. It functions in the pathway porphyrin-containing compound metabolism; chlorophyll biosynthesis. This Thermosynechococcus vestitus (strain NIES-2133 / IAM M-273 / BP-1) protein is Glutamate-1-semialdehyde 2,1-aminomutase.